The chain runs to 309 residues: Probable cell division protein WhiA (309 aa).

Residues 275 to 309 (SLKELGELVPGGPISKSGINHRLRKINQYAEKLRA) constitute a DNA-binding region (H-T-H motif).

This sequence belongs to the WhiA family.

In terms of biological role, involved in cell division and chromosome segregation. The protein is Probable cell division protein WhiA of Pediococcus pentosaceus (strain ATCC 25745 / CCUG 21536 / LMG 10740 / 183-1w).